The chain runs to 597 residues: Elongation factor 4 (597 aa).

The region spanning 2-184 (DHIRNFSIIA…ALIAKVPPPK (183 aa)) is the tr-type G domain. GTP is bound by residues 14–19 (DHGKST) and 131–134 (NKID).

This sequence belongs to the TRAFAC class translation factor GTPase superfamily. Classic translation factor GTPase family. LepA subfamily.

Its subcellular location is the cell inner membrane. It carries out the reaction GTP + H2O = GDP + phosphate + H(+). In terms of biological role, required for accurate and efficient protein synthesis under certain stress conditions. May act as a fidelity factor of the translation reaction, by catalyzing a one-codon backward translocation of tRNAs on improperly translocated ribosomes. Back-translocation proceeds from a post-translocation (POST) complex to a pre-translocation (PRE) complex, thus giving elongation factor G a second chance to translocate the tRNAs correctly. Binds to ribosomes in a GTP-dependent manner. This chain is Elongation factor 4, found in Paraburkholderia phymatum (strain DSM 17167 / CIP 108236 / LMG 21445 / STM815) (Burkholderia phymatum).